Here is a 105-residue protein sequence, read N- to C-terminus: Protamine-2 (105 aa).

Positions 1 to 74 (MVRYRMRSPS…RRSCRRRRRH (74 aa)) are disordered. Ser-8 and Ser-10 each carry phosphoserine. Residues 33 to 42 (NPERVEDYGR) show a composition bias toward basic and acidic residues. A compositionally biased stretch (basic residues) spans 43-74 (THRGHHRHRRCSRKRLHRIHKRRRSCRRRRRH).

Belongs to the protamine P2 family. In terms of assembly, interacts with TDRP. Proteolytic processing into mature chains is required for histone eviction during spermatogenesis. Transition proteins (TNP1 and TNP2) are required for processing. As to expression, testis.

Its subcellular location is the nucleus. It is found in the chromosome. In terms of biological role, protamines substitute for histones in the chromatin of sperm during the haploid phase of spermatogenesis. They compact sperm DNA into a highly condensed, stable and inactive complex. This is Protamine-2 (Prm2) from Rattus tunneyi (Tunney's rat).